Consider the following 773-residue polypeptide: Serine/threonine-protein kinase CBK1 (773 aa).

2 stretches are compositionally biased toward polar residues: residues 50–59 and 178–217; these read LHDQYSSHME and GNYN…SPQR. 2 disordered regions span residues 50 to 111 and 177 to 275; these read LHDQ…GGNI and NGNY…QQQQ. Composition is skewed to low complexity over residues 218-256 and 265-275; these read QPAQ…QQQP and QQTQLQQQQQQ. The Protein kinase domain occupies 370-686; the sequence is FHTVQVIGKG…ADEIKSHPFF (317 aa). ATP-binding positions include 376–384 and lysine 399; that span reads IGKGAFGEV. Aspartate 493 acts as the Proton acceptor in catalysis. Residues 687–771 enclose the AGC-kinase C-terminal domain; sequence RGVDWNTIRQ…SRFDYLTRKN (85 aa).

This sequence belongs to the protein kinase superfamily. STE Ser/Thr protein kinase family. COT1 subfamily.

The catalysed reaction is L-seryl-[protein] + ATP = O-phospho-L-seryl-[protein] + ADP + H(+). The enzyme catalyses L-threonyl-[protein] + ATP = O-phospho-L-threonyl-[protein] + ADP + H(+). Protein kinase that seems to play a role in the regulation of cell morphogenesis and proliferation. In Candida glabrata (strain ATCC 2001 / BCRC 20586 / JCM 3761 / NBRC 0622 / NRRL Y-65 / CBS 138) (Yeast), this protein is Serine/threonine-protein kinase CBK1 (CBK1).